We begin with the raw amino-acid sequence, 207 residues long: Interferon kappa (207 aa).

The N-terminal stretch at M1–S27 is a signal peptide. 2 cysteine pairs are disulfide-bonded: C30/C128 and C59/C181. A coiled-coil region spans residues L118–K148.

Belongs to the alpha/beta interferon family. As to expression, expressed in keratinocytes, monocytes and in resting dendritic cells.

The protein localises to the secreted. Its function is as follows. May play a role in the regulation of immune cell function. Cytokine that imparts cellular protection against viral infection in a species-specific manner. Activates the interferon-stimulated response element signaling pathway. It is able to directly modulate cytokine release from monocytes and dendritic cells. Binds heparin. This chain is Interferon kappa (IFNK), found in Homo sapiens (Human).